The primary structure comprises 428 residues: MKLITNKQGLVGAITVPGDKSMSHRSIMFGAIAEGKTVIRHFLRADDCLGTIKAFKALGVKIEETEEEIIVHGTGFDGLKQADGPLDIGNSGTTIRLMMGILAGRDFDTVILGDESIAKRPMNRVMLPLQQMGAKMHGKDGSEFAPITINGKQSLKRMEYHMPVASAQVKSAIIFAALQAEGETIIHEKEKTRDHTEHMIRQFGGEIEMDGLTIRVKGGQTFTGQEMTVPGDVSSAAFFIVAGLITPGSEIELTHVGLNPTRTGIFDVVEQMGGSLVVKDSSRSTGKLAGTVVVKTSDLKGTEIGGDIIPRLIDEIPVIALLATQAEGTTIIKDAAELKVKETNRIDAVATELNKMGADITPTEDGLIIRGKTPLHAANVTSYGDHRIGMMLQIAALLVEEGDVELERPEAVSVSYPTFFEDIRSLLK.

The 3-phosphoshikimate site is built by Lys-20, Ser-21, and Arg-25. A phosphoenolpyruvate-binding site is contributed by Lys-20. Phosphoenolpyruvate contacts are provided by Gly-92 and Arg-120. 4 residues coordinate 3-phosphoshikimate: Ser-166, Gln-168, Asp-314, and Lys-341. Phosphoenolpyruvate is bound at residue Gln-168. Asp-314 functions as the Proton acceptor in the catalytic mechanism. Phosphoenolpyruvate is bound by residues Arg-345 and Arg-387.

It belongs to the EPSP synthase family. In terms of assembly, monomer.

It is found in the cytoplasm. The catalysed reaction is 3-phosphoshikimate + phosphoenolpyruvate = 5-O-(1-carboxyvinyl)-3-phosphoshikimate + phosphate. Its pathway is metabolic intermediate biosynthesis; chorismate biosynthesis; chorismate from D-erythrose 4-phosphate and phosphoenolpyruvate: step 6/7. Its function is as follows. Catalyzes the transfer of the enolpyruvyl moiety of phosphoenolpyruvate (PEP) to the 5-hydroxyl of shikimate-3-phosphate (S3P) to produce enolpyruvyl shikimate-3-phosphate and inorganic phosphate. This chain is 3-phosphoshikimate 1-carboxyvinyltransferase, found in Listeria monocytogenes serotype 4b (strain CLIP80459).